Here is a 253-residue protein sequence, read N- to C-terminus: Ubiquinone biosynthesis O-methyltransferase (253 aa).

Arg41, Gly72, Asp93, and Met136 together coordinate S-adenosyl-L-methionine.

The protein belongs to the methyltransferase superfamily. UbiG/COQ3 family.

It catalyses the reaction a 3-demethylubiquinol + S-adenosyl-L-methionine = a ubiquinol + S-adenosyl-L-homocysteine + H(+). It carries out the reaction a 3-(all-trans-polyprenyl)benzene-1,2-diol + S-adenosyl-L-methionine = a 2-methoxy-6-(all-trans-polyprenyl)phenol + S-adenosyl-L-homocysteine + H(+). Its pathway is cofactor biosynthesis; ubiquinone biosynthesis. Functionally, O-methyltransferase that catalyzes the 2 O-methylation steps in the ubiquinone biosynthetic pathway. This Chelativorans sp. (strain BNC1) protein is Ubiquinone biosynthesis O-methyltransferase.